The sequence spans 427 residues: Transcriptional enhancer factor TEF-3 (427 aa).

The interval 1–32 (MTSNEWSSPDSPEGSSISGGSQALDKPIDNDA) is disordered. Low complexity predominate over residues 7–21 (SSPDSPEGSSISGGS). The TEA DNA-binding region spans 29–105 (DNDAEGVWSP…QVLARRKARE (77 aa)). The short motif at 78-94 (IKLRTGKTRTRKQVSSH) is the Nuclear localization signal element. The tract at residues 163 to 206 (QPGTSHDVKPFSQNTYPVQPPLPLPGFESPAGPTPSPSAPLAPP) is disordered. Over residues 194-205 (GPTPSPSAPLAP) the composition is skewed to pro residues.

In terms of assembly, interacts with WWTR1/TAZ. Interacts with YAP1. Preferentially expressed in lung and in skeletal muscle.

It localises to the nucleus. Its function is as follows. Transcription factor which plays a key role in the Hippo signaling pathway, a pathway involved in organ size control and tumor suppression by restricting proliferation and promoting apoptosis. The core of this pathway is composed of a kinase cascade wherein MST1/MST2, in complex with its regulatory protein SAV1, phosphorylates and activates LATS1/2 in complex with its regulatory protein MOB1, which in turn phosphorylates and inactivates YAP1 oncoprotein and WWTR1/TAZ. Acts by mediating gene expression of YAP1 and WWTR1/TAZ, thereby regulating cell proliferation, migration and epithelial mesenchymal transition (EMT) induction. Binds specifically and non-cooperatively to the Sph and GT-IIC 'enhansons' (5'-GTGGAATGT-3') and activates transcription. Binds to the M-CAT motif. Might play a role in the embryonic development of skeletal muscle. This is Transcriptional enhancer factor TEF-3 (Tead4) from Mus musculus (Mouse).